The sequence spans 194 residues: Orotate phosphoribosyltransferase (194 aa).

5-phospho-alpha-D-ribose 1-diphosphate is bound at residue 114 to 122; the sequence is EDVVTTGKS. Thr-118 and Arg-146 together coordinate orotate.

Belongs to the purine/pyrimidine phosphoribosyltransferase family. PyrE subfamily. In terms of assembly, homodimer. The cofactor is Mg(2+).

It carries out the reaction orotidine 5'-phosphate + diphosphate = orotate + 5-phospho-alpha-D-ribose 1-diphosphate. The protein operates within pyrimidine metabolism; UMP biosynthesis via de novo pathway; UMP from orotate: step 1/2. In terms of biological role, catalyzes the transfer of a ribosyl phosphate group from 5-phosphoribose 1-diphosphate to orotate, leading to the formation of orotidine monophosphate (OMP). The chain is Orotate phosphoribosyltransferase from Clostridioides difficile (strain 630) (Peptoclostridium difficile).